The chain runs to 446 residues: Na(+)-translocating NADH-quinone reductase subunit A (446 aa).

This sequence belongs to the NqrA family. Composed of six subunits; NqrA, NqrB, NqrC, NqrD, NqrE and NqrF.

It carries out the reaction a ubiquinone + n Na(+)(in) + NADH + H(+) = a ubiquinol + n Na(+)(out) + NAD(+). NQR complex catalyzes the reduction of ubiquinone-1 to ubiquinol by two successive reactions, coupled with the transport of Na(+) ions from the cytoplasm to the periplasm. NqrA to NqrE are probably involved in the second step, the conversion of ubisemiquinone to ubiquinol. This Pasteurella multocida (strain Pm70) protein is Na(+)-translocating NADH-quinone reductase subunit A.